The following is a 563-amino-acid chain: Dihydroxy-acid dehydratase (563 aa).

Asp-79 contacts Mg(2+). Cys-120 serves as a coordination point for [2Fe-2S] cluster. Mg(2+) is bound by residues Asp-121 and Lys-122. Lys-122 is subject to N6-carboxylysine. Cys-193 lines the [2Fe-2S] cluster pocket. Glu-451 is a Mg(2+) binding site. Catalysis depends on Ser-477, which acts as the Proton acceptor.

This sequence belongs to the IlvD/Edd family. As to quaternary structure, homodimer. The cofactor is [2Fe-2S] cluster. Requires Mg(2+) as cofactor.

It catalyses the reaction (2R)-2,3-dihydroxy-3-methylbutanoate = 3-methyl-2-oxobutanoate + H2O. The catalysed reaction is (2R,3R)-2,3-dihydroxy-3-methylpentanoate = (S)-3-methyl-2-oxopentanoate + H2O. It functions in the pathway amino-acid biosynthesis; L-isoleucine biosynthesis; L-isoleucine from 2-oxobutanoate: step 3/4. Its pathway is amino-acid biosynthesis; L-valine biosynthesis; L-valine from pyruvate: step 3/4. Functionally, functions in the biosynthesis of branched-chain amino acids. Catalyzes the dehydration of (2R,3R)-2,3-dihydroxy-3-methylpentanoate (2,3-dihydroxy-3-methylvalerate) into 2-oxo-3-methylpentanoate (2-oxo-3-methylvalerate) and of (2R)-2,3-dihydroxy-3-methylbutanoate (2,3-dihydroxyisovalerate) into 2-oxo-3-methylbutanoate (2-oxoisovalerate), the penultimate precursor to L-isoleucine and L-valine, respectively. This Sulfurovum sp. (strain NBC37-1) protein is Dihydroxy-acid dehydratase.